The chain runs to 358 residues: Microbial Terpene synthase-like protein 13 (358 aa).

The protein belongs to the terpene synthase family.

Functionally, no terpene synthase activity detected in vitro. The protein is Microbial Terpene synthase-like protein 13 of Selaginella moellendorffii (Spikemoss).